Consider the following 514-residue polypeptide: Variant surface glycoprotein ILTAT 1.24 (514 aa).

The N-terminal stretch at 1–23 is a signal peptide; the sequence is MVYRNILQLSVLKVLLIVLIVEA. 2 cysteine pairs are disulfide-bonded: cysteine 37–cysteine 162 and cysteine 143–cysteine 204. An N-linked (GlcNAc...) asparagine glycan is attached at asparagine 443. Residues 451-476 form a disordered region; the sequence is GVPVTQTQTAGADTTAEKCKGKGEKD. Residues 455–464 show a composition bias toward low complexity; it reads TQTQTAGADT. The span at 465–476 shows a compositional bias: basic and acidic residues; sequence TAEKCKGKGEKD. Aspartate 491 carries the GPI-anchor amidated aspartate lipid modification. Residues 492–514 constitute a propeptide, removed in mature form; the sequence is SSILANKQFALSVASAAFVALLF.

It is found in the cell membrane. Its function is as follows. VSG forms a coat on the surface of the parasite. The trypanosome evades the immune response of the host by expressing a series of antigenically distinct VSGs from an estimated 1000 VSG genes. This Trypanosoma brucei brucei protein is Variant surface glycoprotein ILTAT 1.24.